Consider the following 5571-residue polypeptide: Polyketide synthase GfsB (5571 aa).

A disordered region spans residues 1-27 (MSVPPPGATPSRTSRTKGLKDRPRMEN). A compositionally biased stretch (basic and acidic residues) spans 18-27 (GLKDRPRMEN). Residues 57 to 483 (QEPVAIIGMS…GTNAHVIIEQ (427 aa)) form the Ketosynthase family 3 (KS3) 1 domain. 3 module regions span residues 57-2148 (QEPV…RDTL), 2167-3728 (DEPL…GSQV), and 3746-5485 (DEPV…HTHL). Catalysis depends on for beta-ketoacyl synthase 1 activity residues Cys-230, His-365, and His-405. Residues 485 to 518 (PAIEGTGLGDDAPPTAEHPEERTPADGGPAPQPV) are disordered. The Malonyl-CoA:ACP transacylase (MAT) 1 domain occupies 611 to 926 (FVFPGQGSQW…LRSLAEAYAH (316 aa)). Residues 976–1109 (HPLLAAATSL…GYLAVGAHEP (134 aa)) form an N-terminal hotdog fold 1 region. The region spanning 976–1264 (HPLLAAATSL…LRPLATNQAP (289 aa)) is the PKS/mFAS DH 1 domain. Residue His-1008 is the Proton acceptor; for dehydratase activity 1 of the active site. A C-terminal hotdog fold 1 region spans residues 1122 to 1264 (ATPLDVTDLY…LRPLATNQAP (143 aa)). Asp-1183 functions as the Proton donor; for dehydratase activity 1 in the catalytic mechanism. Residues 1478–1777 (GTLDHLTLIP…QARHIGKIVL (300 aa)) enclose the Enoyl reductase (ER) domain. Positions 1787–1966 (GTVLVTGATG…TSLAWGLWEE (180 aa)) constitute a Ketoreductase (KR) 1 domain. Residues 2073-2148 (RIVNDLVRDH…ELAAHLRDTL (76 aa)) enclose the Carrier 1 domain. Ser-2108 is subject to O-(pantetheine 4'-phosphoryl)serine. The Ketosynthase family 3 (KS3) 2 domain occupies 2167–2593 (DEPLAVVAMS…GTNAHVILEQ (427 aa)). Active-site for beta-ketoacyl synthase 2 activity residues include Cys-2340, His-2475, and His-2515. The 307-residue stretch at 2710 to 3016 (VFSGQGSQRP…AAVALQRGNR (307 aa)) folds into the Malonyl-CoA:ACP transacylase (MAT) 2 domain. The region spanning 3373-3551 (GTVLVTGGTG…VSVAWGPWAE (179 aa)) is the Ketoreductase (KR) 2 domain. Residues 3653–3728 (TALLDLVRGQ…ALAEYVGSQV (76 aa)) enclose the Carrier 2 domain. At Ser-3688 the chain carries O-(pantetheine 4'-phosphoryl)serine. In terms of domain architecture, Ketosynthase family 3 (KS3) 3 spans 3746 to 4172 (DEPVAIIGMS…GTNAHVILEQ (427 aa)). Catalysis depends on for beta-ketoacyl synthase 3 activity residues Cys-3919, His-4054, and His-4094. Positions 4279 to 4601 (FLFSGQGSQR…ATAHVNGVQP (323 aa)) constitute a Malonyl-CoA:ACP transacylase (MAT) 3 domain. The interval 4649-4774 (HPLLAGVVDL…GALTVAEAVD (126 aa)) is N-terminal hotdog fold 2. The 283-residue stretch at 4649–4931 (HPLLAGVVDL…TRPIAAGQLA (283 aa)) folds into the PKS/mFAS DH 2 domain. His-4681 (proton acceptor; for dehydratase activity 2) is an active-site residue. Residues 4787–4931 (AIEVELDDPY…TRPIAAGQLA (145 aa)) are C-terminal hotdog fold 2. The active-site Proton donor; for dehydratase activity 2 is the Asp-4848. One can recognise a Ketoreductase (KR) 3 domain in the interval 5134–5306 (LLVTGASGVL…TSLSWGLWAE (173 aa)). The Carrier 3 domain maps to 5410–5485 (RMVLDLVRDR…ALARYLHTHL (76 aa)). Ser-5445 carries the post-translational modification O-(pantetheine 4'-phosphoryl)serine.

It depends on pantetheine 4'-phosphate as a cofactor.

It functions in the pathway antibiotic biosynthesis. Its function is as follows. Second protein in the synthesis of the 16-membered macrolide antibiotics FD-891 and FD-892. Composed of 3 modules. Modifies the product of GfsA by multiple rounds of addition of malonyl-CoA or methylmalonyl-CoA and other modifications to help generate the final products. The sequence is that of Polyketide synthase GfsB from Streptomyces halstedii.